The primary structure comprises 337 residues: Protein-arginine kinase (337 aa).

Residues 8-239 (VVLSSRIRLA…KQIISSERRA (232 aa)) form the Phosphagen kinase C-terminal domain. Residues 11-15 (SSRIR), His-76, Arg-110, 161-165 (RASVM), and 192-197 (RGIYGE) contribute to the ATP site. Positions 321-326 (RDVKRA) match the RDXXRA motif of the pArg binding pocket involved in allosteric regulation motif.

It belongs to the ATP:guanido phosphotransferase family.

It catalyses the reaction L-arginyl-[protein] + ATP = N(omega)-phospho-L-arginyl-[protein] + ADP + H(+). With respect to regulation, appears to be allosterically activated by the binding of pArg-containing polypeptides to the pArg-binding pocket localized in the C-terminal domain of McsB. Its function is as follows. Catalyzes the specific phosphorylation of arginine residues in proteins. This Caldanaerobacter subterraneus subsp. tengcongensis (strain DSM 15242 / JCM 11007 / NBRC 100824 / MB4) (Thermoanaerobacter tengcongensis) protein is Protein-arginine kinase.